The sequence spans 464 residues: Spore coat protein SP65 (464 aa).

An N-terminal signal peptide occupies residues 1–17 (MKVLLLLVCLVFAYVNA). The Follistatin-like 1 domain occupies 21–43 (ACYNVVCPSNYQCRAEGDQAYCV). A glycan (N-linked (GlcNAc...) asparagine) is linked at Asn-111. Follistatin-like domains lie at 121-143 (VCRDFQCPVGTHCFNGERGPHCV) and 151-173 (LCRVTKCSYDFTCKMVRGNPTCL). The N-linked (GlcNAc...) asparagine glycan is linked to Asn-247. The interval 250–320 (STTGATTGAT…STTGAATTAP (71 aa)) is disordered.

In terms of assembly, binds to the C-terminal region of pspB.

The protein resides in the spore wall. Its function is as follows. Forms a triad with cellulose and pspB that is essential for spore outer layer formation. This chain is Spore coat protein SP65 (cotE), found in Dictyostelium discoideum (Social amoeba).